The following is a 261-amino-acid chain: Hemin import ATP-binding protein HmuV (261 aa).

Residues 7–243 enclose the ABC transporter domain; sequence LRGQNLSLQF…EIIDAVYGYK (237 aa). 39 to 46 serves as a coordination point for ATP; the sequence is GPNGAGKS.

The protein belongs to the ABC transporter superfamily. Heme (hemin) importer (TC 3.A.1.14.5) family. In terms of assembly, the complex is composed of two ATP-binding proteins (HmuV), two transmembrane proteins (HmuU) and a solute-binding protein (HmuT).

The protein resides in the cell inner membrane. Functionally, part of the ABC transporter complex HmuTUV involved in hemin import. Responsible for energy coupling to the transport system. The chain is Hemin import ATP-binding protein HmuV from Vibrio vulnificus (strain CMCP6).